Consider the following 251-residue polypeptide: MSAPSGGGEGGGKESAAGGVSSSSLAPSSLPPPRPKSPPEYPDLYGKRREAARVQMLEREIGFLEGEIKFIEGVQPASRCIKEVSDFVVANSDPLIPAQRKSRRSFRFWKWLCGPCLSLVSFCCCCQSKCSCHLRKPKCCNCTSCSCIGSKCCDGSCCSNICCCPRLSCPSCSCFRGCWCSCPDMSCCIPSCFRSCSCTRPSCLNKKKSSCCSCNCKIRWSSCFSCPKVRLCSCCFCNCKNLCSNPCCLAF.

Positions 1-10 (MSAPSGGGEG) are enriched in gly residues. The tract at residues 1–44 (MSAPSGGGEGGGKESAAGGVSSSSLAPSSLPPPRPKSPPEYPDL) is disordered. The span at 14-28 (ESAAGGVSSSSLAPS) shows a compositional bias: low complexity. Residues 29 to 41 (SLPPPRPKSPPEY) are compositionally biased toward pro residues. In terms of domain architecture, G protein gamma spans 46–126 (GKRREAARVQ…LSLVSFCCCC (81 aa)). Cysteine methyl ester is present on cysteine 248. Cysteine 248 carries the S-farnesyl cysteine lipid modification. The propeptide at 249–251 (LAF) is removed in mature form.

As to quaternary structure, g proteins are composed of 3 units, alpha, beta and gamma. In terms of tissue distribution, expressed in flowers and siliques.

Guanine nucleotide-binding proteins (G proteins) are involved as a modulator or transducer in various transmembrane signaling systems. The beta and gamma chains are required for the GTPase activity, for replacement of GDP by GTP, and for G protein-effector interaction. This chain is Guanine nucleotide-binding protein subunit gamma 3 (GG3), found in Arabidopsis thaliana (Mouse-ear cress).